Here is a 946-residue protein sequence, read N- to C-terminus: Bifunctional glutamine synthetase adenylyltransferase/adenylyl-removing enzyme (946 aa).

The tract at residues 1–440 is adenylyl removase; it reads MKPLSSPLQQ…VFNELIGDDE (440 aa). Residues 449-946 form an adenylyl transferase region; it reads SEQWRELWQD…ASWQKWLVEE (498 aa).

Belongs to the GlnE family. Mg(2+) serves as cofactor.

The enzyme catalyses [glutamine synthetase]-O(4)-(5'-adenylyl)-L-tyrosine + phosphate = [glutamine synthetase]-L-tyrosine + ADP. It carries out the reaction [glutamine synthetase]-L-tyrosine + ATP = [glutamine synthetase]-O(4)-(5'-adenylyl)-L-tyrosine + diphosphate. Functionally, involved in the regulation of glutamine synthetase GlnA, a key enzyme in the process to assimilate ammonia. When cellular nitrogen levels are high, the C-terminal adenylyl transferase (AT) inactivates GlnA by covalent transfer of an adenylyl group from ATP to specific tyrosine residue of GlnA, thus reducing its activity. Conversely, when nitrogen levels are low, the N-terminal adenylyl removase (AR) activates GlnA by removing the adenylyl group by phosphorolysis, increasing its activity. The regulatory region of GlnE binds the signal transduction protein PII (GlnB) which indicates the nitrogen status of the cell. The protein is Bifunctional glutamine synthetase adenylyltransferase/adenylyl-removing enzyme of Shigella sonnei (strain Ss046).